The following is a 577-amino-acid chain: Endopolyphosphatase (577 aa).

Over 1-2 (MR) the chain is Cytoplasmic. The chain crosses the membrane as a helical; Signal-anchor for type II membrane protein span at residues 3–23 (PSVITVAVLFVQSTWASFAFG). The Vacuolar portion of the chain corresponds to 24-577 (NPMSMRNKAH…YIGSISDFED (554 aa)). N-linked (GlcNAc...) asparagine glycans are attached at residues Asn363, Asn370, Asn375, and Asn399. The tract at residues 430–460 (SDYEIDKKKKKKKKNNKKKKKNKRKNIKPGP) is disordered. Residues 437 to 456 (KKKKKKKNNKKKKKNKRKNI) show a composition bias toward basic residues. Asn481 is a glycosylation site (N-linked (GlcNAc...) asparagine).

Belongs to the endopolyphosphatase PPN1 family. It depends on a divalent metal cation as a cofactor. In terms of processing, processing by proteases in the vacuole may be required for activation.

It localises to the vacuole membrane. It catalyses the reaction [phosphate](n+1) + n H2O = (n+1) phosphate + n H(+). Functionally, catalyzes the hydrolysis of inorganic polyphosphate (polyP) chains of many hundreds of phosphate residues into shorter lengths. The chain is Endopolyphosphatase (ppn1) from Schizosaccharomyces pombe (strain 972 / ATCC 24843) (Fission yeast).